The following is a 358-amino-acid chain: Vesicular integral-membrane protein VIP36 (358 aa).

The signal sequence occupies residues 1-46; that stretch reads MAAEAWLWRWGWGWGQRCPGRPGLPGPGPSPTTFLHLLLLLGPVAA. Residues 47–324 are Lumenal-facing; the sequence is DITDGNSEHL…FRNGPLTGWR (278 aa). The region spanning 54–278 is the L-type lectin-like domain; that stretch reads EHLKREHSLI…DIISIKLFQL (225 aa). A carbohydrate contacts are provided by S98 and D133. Residues D164, Y166, and N168 each coordinate Ca(2+). 166–168 is an a carbohydrate binding site; it reads YPN. N185 is a glycosylation site (N-linked (GlcNAc...) asparagine). H192 contacts a carbohydrate. Residue D195 coordinates Ca(2+). C204 and C241 are disulfide-bonded. 262 to 264 provides a ligand contact to a carbohydrate; that stretch reads GDL. Residues 325–347 form a helical membrane-spanning segment; that stretch reads VFLLLLCALLGVVVCAVVGAVVF. Residues 348–358 are Cytoplasmic-facing; it reads QKRQERNKRFY.

It depends on Ca(2+) as a cofactor.

The protein resides in the golgi apparatus membrane. Functionally, plays a role as an intracellular lectin in the early secretory pathway. Interacts with N-acetyl-D-galactosamine and high-mannose type glycans and may also bind to O-linked glycans. Involved in the transport and sorting of glycoproteins carrying high mannose-type glycans. The chain is Vesicular integral-membrane protein VIP36 (Lman2) from Mus musculus (Mouse).